A 206-amino-acid polypeptide reads, in one-letter code: Dephospho-CoA kinase (206 aa).

The DPCK domain maps to 4–204 (IVGLTGGIGS…QFYLQQAENK (201 aa)). 12 to 17 (GSGKTT) serves as a coordination point for ATP.

It belongs to the CoaE family.

The protein resides in the cytoplasm. The enzyme catalyses 3'-dephospho-CoA + ATP = ADP + CoA + H(+). It participates in cofactor biosynthesis; coenzyme A biosynthesis; CoA from (R)-pantothenate: step 5/5. Catalyzes the phosphorylation of the 3'-hydroxyl group of dephosphocoenzyme A to form coenzyme A. The protein is Dephospho-CoA kinase of Haemophilus influenzae (strain ATCC 51907 / DSM 11121 / KW20 / Rd).